The primary structure comprises 189 residues: Ribosomal RNA large subunit methyltransferase E (189 aa).

Residues Gly45, Phe47, Asp64, Asp82, and Asp104 each coordinate S-adenosyl-L-methionine. Residue Lys144 is the Proton acceptor of the active site.

The protein belongs to the class I-like SAM-binding methyltransferase superfamily. RNA methyltransferase RlmE family.

The protein resides in the cytoplasm. The catalysed reaction is uridine(2552) in 23S rRNA + S-adenosyl-L-methionine = 2'-O-methyluridine(2552) in 23S rRNA + S-adenosyl-L-homocysteine + H(+). Functionally, specifically methylates the uridine in position 2552 of 23S rRNA at the 2'-O position of the ribose in the fully assembled 50S ribosomal subunit. This Borreliella afzelii (strain PKo) (Borrelia afzelii) protein is Ribosomal RNA large subunit methyltransferase E.